The sequence spans 115 residues: Tyrosine-protein phosphatase 22 (115 aa).

Residues 1–115 form the Tyrosine-protein phosphatase domain; sequence WLMIVEQKCR…ETGGDAPMVV (115 aa). Asp-83 contributes to the substrate binding site.

Belongs to the protein-tyrosine phosphatase family.

It carries out the reaction O-phospho-L-tyrosyl-[protein] + H2O = L-tyrosyl-[protein] + phosphate. The protein is Tyrosine-protein phosphatase 22 (STY-22) of Styela plicata (Wrinkled sea squirt).